The following is a 303-amino-acid chain: Geranylgeranyl pyrophosphate synthase (303 aa).

Residues Lys32, Arg35, and His64 each contribute to the isopentenyl diphosphate site. 2 residues coordinate Mg(2+): Asp71 and Asp75. Arg80 contacts dimethylallyl diphosphate. Arg81 contributes to the isopentenyl diphosphate binding site. Dimethylallyl diphosphate-binding residues include Lys158, Thr159, Gln192, Lys209, and Lys219.

Belongs to the FPP/GGPP synthase family. As to quaternary structure, homooligomer. Mg(2+) is required as a cofactor.

It is found in the cytoplasm. It catalyses the reaction isopentenyl diphosphate + dimethylallyl diphosphate = (2E)-geranyl diphosphate + diphosphate. The enzyme catalyses isopentenyl diphosphate + (2E)-geranyl diphosphate = (2E,6E)-farnesyl diphosphate + diphosphate. The catalysed reaction is isopentenyl diphosphate + (2E,6E)-farnesyl diphosphate = (2E,6E,10E)-geranylgeranyl diphosphate + diphosphate. The protein operates within isoprenoid biosynthesis; farnesyl diphosphate biosynthesis; farnesyl diphosphate from geranyl diphosphate and isopentenyl diphosphate: step 1/1. It participates in isoprenoid biosynthesis; geranyl diphosphate biosynthesis; geranyl diphosphate from dimethylallyl diphosphate and isopentenyl diphosphate: step 1/1. It functions in the pathway isoprenoid biosynthesis; geranylgeranyl diphosphate biosynthesis; geranylgeranyl diphosphate from farnesyl diphosphate and isopentenyl diphosphate: step 1/1. Its function is as follows. Catalyzes the trans-addition of the three molecules of IPP onto DMAPP to form geranylgeranyl pyrophosphate, an important precursor of carotenoids and geranylated proteins. The protein is Geranylgeranyl pyrophosphate synthase (ggps1) of Dictyostelium discoideum (Social amoeba).